We begin with the raw amino-acid sequence, 430 residues long: Serine carboxypeptidase-like 13 (430 aa).

A signal peptide spans 1–22 (MSLTLEFLLLLIVLILSHHAHS). Intrachain disulfides connect C81–C319, C240–C254, and C278–C285. An N-linked (GlcNAc...) asparagine glycan is attached at N102. The active site involves S177. 2 N-linked (GlcNAc...) asparagine glycosylation sites follow: N299 and N323. The active site involves D355. N-linked (GlcNAc...) asparagine glycosylation occurs at N371. Residue H408 is part of the active site.

Belongs to the peptidase S10 family. Expression not detected.

Its subcellular location is the secreted. It catalyses the reaction 2 1-O-(trans-sinapoyl)-beta-D-glucose = 1,2-di-O-sinapoyl beta-D-glucose + D-glucose. Its function is as follows. Catalyzes the formation of 1,2-bis-O-sinapoyl beta-D-glucoside. The protein is Serine carboxypeptidase-like 13 (SCPL13) of Arabidopsis thaliana (Mouse-ear cress).